The sequence spans 168 residues: 2-C-methyl-D-erythritol 2,4-cyclodiphosphate synthase (168 aa).

The a divalent metal cation site is built by D11 and H13. 4-CDP-2-C-methyl-D-erythritol 2-phosphate-binding positions include 11–13 (DVH) and 41–42 (HS). H49 contacts a divalent metal cation. Residues 63–65 (DIG), 68–72 (FPDTD), 139–142 (TTTE), F146, and R149 each bind 4-CDP-2-C-methyl-D-erythritol 2-phosphate.

It belongs to the IspF family. Homotrimer. It depends on a divalent metal cation as a cofactor.

The enzyme catalyses 4-CDP-2-C-methyl-D-erythritol 2-phosphate = 2-C-methyl-D-erythritol 2,4-cyclic diphosphate + CMP. It participates in isoprenoid biosynthesis; isopentenyl diphosphate biosynthesis via DXP pathway; isopentenyl diphosphate from 1-deoxy-D-xylulose 5-phosphate: step 4/6. In terms of biological role, involved in the biosynthesis of isopentenyl diphosphate (IPP) and dimethylallyl diphosphate (DMAPP), two major building blocks of isoprenoid compounds. Catalyzes the conversion of 4-diphosphocytidyl-2-C-methyl-D-erythritol 2-phosphate (CDP-ME2P) to 2-C-methyl-D-erythritol 2,4-cyclodiphosphate (ME-CPP) with a corresponding release of cytidine 5-monophosphate (CMP). This Psychrobacter cryohalolentis (strain ATCC BAA-1226 / DSM 17306 / VKM B-2378 / K5) protein is 2-C-methyl-D-erythritol 2,4-cyclodiphosphate synthase.